The following is a 327-amino-acid chain: Glutaminase 1 (327 aa).

Positions 74, 126, 170, 177, 201, 253, and 271 each coordinate substrate.

The protein belongs to the glutaminase family. As to quaternary structure, homotetramer.

It catalyses the reaction L-glutamine + H2O = L-glutamate + NH4(+). This is Glutaminase 1 (glsA1) from Bacillus subtilis (strain 168).